The primary structure comprises 239 residues: Ribosomal RNA small subunit methyltransferase G (239 aa).

Residues Gly77, Phe82, 128-129 (AE), and Arg146 contribute to the S-adenosyl-L-methionine site. The segment at 215-239 (DKKRQTPKKYPRKPGTPNKTPLLEK) is disordered.

The protein belongs to the methyltransferase superfamily. RNA methyltransferase RsmG family.

The protein resides in the cytoplasm. Its function is as follows. Specifically methylates the N7 position of guanine in position 535 of 16S rRNA. This is Ribosomal RNA small subunit methyltransferase G from Staphylococcus aureus (strain bovine RF122 / ET3-1).